Consider the following 573-residue polypeptide: Delta 8-(E)-sphingolipid desaturase (573 aa).

Residues 2–77 (SRVLSRRDIA…FKIWKIGRID (76 aa)) enclose the Cytochrome b5 heme-binding domain. H37 and H60 together coordinate heme. A helical transmembrane segment spans residues 228-248 (LFGISFYLLSLKWFAISAICL). The Histidine box-1 signature appears at 260–264 (HDAGH). Residues 273–293 (VDNIIGMTVASWIGGLSLGWW) form a helical membrane-spanning segment. The Histidine box-2 motif lies at 297–301 (HNVHH). The next 3 membrane-spanning stretches (helical) occupy residues 353–372 (YLYYPILCFGRFNLYRLSWM), 393–413 (LAGLSFFNYWFFYLIIYKQMP), and 422–442 (VMISHIATMIVHVQITLSHFA). The short motif at 481–485 (QVIHH) is the Histidine box-3 element.

Belongs to the fatty acid desaturase type 1 family.

The protein resides in the membrane. It catalyses the reaction an N-acylsphing-4-enine + 2 Fe(II)-[cytochrome b5] + O2 + 2 H(+) = a (4E,8E)-4-sphinga-4,8-dienine ceramide + 2 Fe(III)-[cytochrome b5] + 2 H2O. Its pathway is lipid metabolism; sphingolipid metabolism. Delta(8)-fatty-acid desaturase which introduces a double bond at the 8-position in the long-chain base (LCB) of ceramides. Required for the formation of the di-unsaturated sphingoid base (E,E)-sphinga-4,8-dienine during glucosylceramide (GluCer) biosynthesis. This Kluyveromyces lactis (strain ATCC 8585 / CBS 2359 / DSM 70799 / NBRC 1267 / NRRL Y-1140 / WM37) (Yeast) protein is Delta 8-(E)-sphingolipid desaturase.